Consider the following 302-residue polypeptide: 33 kDa chaperonin (302 aa).

2 cysteine pairs are disulfide-bonded: cysteine 234–cysteine 236 and cysteine 267–cysteine 270.

The protein belongs to the HSP33 family. In terms of processing, under oxidizing conditions two disulfide bonds are formed involving the reactive cysteines. Under reducing conditions zinc is bound to the reactive cysteines and the protein is inactive.

It is found in the cytoplasm. In terms of biological role, redox regulated molecular chaperone. Protects both thermally unfolding and oxidatively damaged proteins from irreversible aggregation. Plays an important role in the bacterial defense system toward oxidative stress. In Neisseria meningitidis serogroup B (strain ATCC BAA-335 / MC58), this protein is 33 kDa chaperonin.